A 614-amino-acid chain; its full sequence is DNA-directed DNA polymerase (614 aa).

This sequence belongs to the DNA polymerase type-A family.

It catalyses the reaction DNA(n) + a 2'-deoxyribonucleoside 5'-triphosphate = DNA(n+1) + diphosphate. Functionally, replicates viral genomic DNA. This polymerase possesses two enzymatic activities: DNA synthesis (polymerase) and an exonucleolytic activity that degrades single-stranded DNA in the 3'-5' direction. This is DNA-directed DNA polymerase from Escherichia coli (Escherichia coli phage phi32).